The primary structure comprises 411 residues: Serine hydroxymethyltransferase (411 aa).

Residues Leu-119 and 123–125 (GHL) each bind (6S)-5,6,7,8-tetrahydrofolate. Position 228 is an N6-(pyridoxal phosphate)lysine (Lys-228). 351–353 (SPF) serves as a coordination point for (6S)-5,6,7,8-tetrahydrofolate.

This sequence belongs to the SHMT family. Homodimer. The cofactor is pyridoxal 5'-phosphate.

It localises to the cytoplasm. The catalysed reaction is (6R)-5,10-methylene-5,6,7,8-tetrahydrofolate + glycine + H2O = (6S)-5,6,7,8-tetrahydrofolate + L-serine. Its pathway is one-carbon metabolism; tetrahydrofolate interconversion. It participates in amino-acid biosynthesis; glycine biosynthesis; glycine from L-serine: step 1/1. Its function is as follows. Catalyzes the reversible interconversion of serine and glycine with tetrahydrofolate (THF) serving as the one-carbon carrier. This reaction serves as the major source of one-carbon groups required for the biosynthesis of purines, thymidylate, methionine, and other important biomolecules. Also exhibits THF-independent aldolase activity toward beta-hydroxyamino acids, producing glycine and aldehydes, via a retro-aldol mechanism. In Clostridium beijerinckii (strain ATCC 51743 / NCIMB 8052) (Clostridium acetobutylicum), this protein is Serine hydroxymethyltransferase.